The sequence spans 548 residues: MFATVSLLFCLLLQPSPSAQQYHGEKGISVPDHGFCQPISIPLCTDIAYNQTIMPNLLGHTNQEDAGLEVHQFYPLVKVQCSPELRFFLCSMYAPVCTVLEQAIPPCRSLCERARQGCEALMNKFGFQWPERLRCENFPVHGAGEICVGQNTSDNSPSGPTARPTPYLPDSITFHPHPNRDFTCPRQLKVPPYLGYRFLGEKDCGAPCEPGKANGLMYFKEEEVRFARLWVGIWAILCGISTLFTVLTYLVDMRRFSYPERPIIFLSGCYFMVAVAYTAGFLLEERGVCVERFSEDSYRTVAQGTKKEGCTILFMILYFFGMASSIWWVILSLTWFLAAGMKWGHEAIEANSQYFHLAAWAVPAVKTITILAMGQVDGDILSGVCYVGINSVDSLRGFVLAPLFVYLFIGTSFLLAGFVSLFRIRTIMKHDGTKTEKLEKLMVRIGVFSVMYTVPATIVLACYFYEQAFRDTWEKTWLVQTCKGFAVPCPNYNFAPMSPDFTVFMIKYLMTMIVGITSSFWIWSGKTLQSWRRFYHRLSNGGKGETAV.

Positions 1 to 19 (MFATVSLLFCLLLQPSPSA) are cleaved as a signal peptide. Residues 20–230 (QQYHGEKGIS…EEEVRFARLW (211 aa)) lie on the Extracellular side of the membrane. The FZ domain occupies 31–150 (PDHGFCQPIS…HGAGEICVGQ (120 aa)). Cystine bridges form between C36-C97, C44-C90, C81-C118, C107-C147, and C111-C135. The N-linked (GlcNAc...) asparagine glycan is linked to N50. The N-linked (GlcNAc...) asparagine glycan is linked to N151. A helical membrane pass occupies residues 231–251 (VGIWAILCGISTLFTVLTYLV). Residues 252 to 262 (DMRRFSYPERP) lie on the Cytoplasmic side of the membrane. Residues 263-283 (IIFLSGCYFMVAVAYTAGFLL) traverse the membrane as a helical segment. Residues 284–310 (EERGVCVERFSEDSYRTVAQGTKKEGC) lie on the Extracellular side of the membrane. Residues 311–331 (TILFMILYFFGMASSIWWVIL) traverse the membrane as a helical segment. The Cytoplasmic segment spans residues 332 to 353 (SLTWFLAAGMKWGHEAIEANSQ). The chain crosses the membrane as a helical span at residues 354–374 (YFHLAAWAVPAVKTITILAMG). At 375-397 (QVDGDILSGVCYVGINSVDSLRG) the chain is on the extracellular side. A helical transmembrane segment spans residues 398 to 418 (FVLAPLFVYLFIGTSFLLAGF). Over 419-444 (VSLFRIRTIMKHDGTKTEKLEKLMVR) the chain is Cytoplasmic. Residues 445–465 (IGVFSVMYTVPATIVLACYFY) traverse the membrane as a helical segment. At 466–502 (EQAFRDTWEKTWLVQTCKGFAVPCPNYNFAPMSPDFT) the chain is on the extracellular side. A helical transmembrane segment spans residues 503–523 (VFMIKYLMTMIVGITSSFWIW). The Cytoplasmic portion of the chain corresponds to 524–548 (SGKTLQSWRRFYHRLSNGGKGETAV). The Lys-Thr-X-X-X-Trp motif, mediates interaction with the PDZ domain of Dvl family members motif lies at 526 to 531 (KTLQSW). Positions 546 to 548 (TAV) match the PDZ-binding motif.

The protein belongs to the G-protein coupled receptor Fz/Smo family. In terms of assembly, interacts with wnt11 and sdc4. The extracellular domain interacts with the extracellular domain of pcdh8/papc.

It localises to the cell membrane. Its subcellular location is the endosome membrane. Its function is as follows. Receptor for Wnt proteins. Acts in both canonical and non-canonical Wnt pathways. Although different papers report differing Wnt preferences, wnt5a, wnt8b and wnt11 have been proposed as synergists. In the canonical Wnt pathway, acts via beta-catenin to promote the expression of the dorsal genes siamois, twin and nodal3 and to establish the dorsal axis of the embryo and induce dorsal mesoderm formation. In a non-canonical Wnt/planar cell polarity (PCP) pathway, acts with sdc4 and dvl2/dsh to regulate convergent extension movements in gastrulation. Triggers phosphorylation of dvl2/dsh and its translocation to the plasma membrane. In a third branch of Wnt signaling, acts in a non-canonical pathway via trimeric G proteins, and independently of dvl2/dsh, to recruit protein kinase C (PKC) to the membrane and thus activate PKC. PKC signaling controls cell sorting and tissue separation during gastrulation. The sequence is that of Frizzled-7 from Xenopus tropicalis (Western clawed frog).